The primary structure comprises 130 residues: Small ribosomal subunit protein uS8 (130 aa).

It belongs to the universal ribosomal protein uS8 family. Part of the 30S ribosomal subunit. Contacts proteins S5 and S12.

Its function is as follows. One of the primary rRNA binding proteins, it binds directly to 16S rRNA central domain where it helps coordinate assembly of the platform of the 30S subunit. The sequence is that of Small ribosomal subunit protein uS8 from Pectobacterium carotovorum subsp. carotovorum (strain PC1).